Here is a 956-residue protein sequence, read N- to C-terminus: MAM domain-containing glycosylphosphatidylinositol anchor protein 2 (956 aa).

The signal sequence occupies residues 1–25 (MDLLYGLVWLLTVLLEGISGQGVYA). 2 Ig-like domains span residues 27 to 127 (PTVR…IRVD) and 134 to 232 (PVVT…KMVS). Cystine bridges form between C62-C110 and C159-C216. N92, N213, and N237 each carry an N-linked (GlcNAc...) asparagine glycan. 4 Ig-like domains span residues 242–328 (PSIK…NIIV), 340–436 (PDPY…VNIS), 442–533 (PNLT…ALVQ), and 540–627 (PAVE…FLVT). 2 disulfides stabilise this stretch: C264-C310 and C359-C417. Residues N434, N443, N504, N610, and N703 are each glycosylated (N-linked (GlcNAc...) asparagine). 2 cysteine pairs are disulfide-bonded: C465–C515 and C561–C611. Residues 638-739 (DTYNPVWQNR…IRVIKYSAPV (102 aa)) form the Fibronectin type-III domain. In terms of domain architecture, MAM spans 746-921 (FHCGFEDGNI…VSIAEGECAK (176 aa)). D931 carries the GPI-anchor amidated aspartate lipid modification. A propeptide spans 932–956 (GAVGILVHIWLFPIIVLISILSPRR) (removed in mature form).

Interacts (through the Ig-like domains) with NLGN2. In terms of tissue distribution, detected in Leydig cells, syncytiotrophoblast, duodenal villi epithelial cells and neutrophils from kidney and cutaneous squamous cell carcinoma (at protein level).

It is found in the cell membrane. May be involved in cell-cell interactions. This Homo sapiens (Human) protein is MAM domain-containing glycosylphosphatidylinositol anchor protein 2 (MDGA2).